Consider the following 203-residue polypeptide: MGAEKITSKIMEDAKIQANVILAEAQKEKEALIKKAHEEAEKKKQAILKKGEKDAEMTRNRILAEARLSAKKNSLEERERTIAKAIQKLEEDLVKLPQKDEYKDILLKMIITGVYSVGGGELDLQLNKNDWKLIDDSTLWALEKEMEDRLKKVTVLKKGESLPIIGGCVVKTADKTKVSDNSLEATFERNLDIIRAKIAEMLF.

It belongs to the V-ATPase E subunit family. As to quaternary structure, has multiple subunits with at least A(3), B(3), C, D, E, F, H, I and proteolipid K(x).

It localises to the cell membrane. Functionally, component of the A-type ATP synthase that produces ATP from ADP in the presence of a proton gradient across the membrane. The polypeptide is A-type ATP synthase subunit E (Methanococcus vannielii (strain ATCC 35089 / DSM 1224 / JCM 13029 / OCM 148 / SB)).